We begin with the raw amino-acid sequence, 227 residues long: Esterase OVCA2 (227 aa).

Active-site charge relay system residues include Ser120, Asp180, and His207.

The protein belongs to the LovG family.

It catalyses the reaction a carboxylic ester + H2O = an alcohol + a carboxylate + H(+). Exhibits ester hydrolase activity with a strong preference for long-chain alkyl ester substrates and high selectivity against a variety of short, branched, and substituted esters. Is able to hydrolyze ester bonds within a wide range of p-nitrophenyl derivatives (C2-C14) in vitro, with a strong preference toward substrates of &gt;8 carbons. This chain is Esterase OVCA2 (ovca2), found in Danio rerio (Zebrafish).